A 358-amino-acid chain; its full sequence is Peptide chain release factor 1 (358 aa).

Residue Gln235 is modified to N5-methylglutamine.

The protein belongs to the prokaryotic/mitochondrial release factor family. In terms of processing, methylated by PrmC. Methylation increases the termination efficiency of RF1.

It is found in the cytoplasm. Peptide chain release factor 1 directs the termination of translation in response to the peptide chain termination codons UAG and UAA. The protein is Peptide chain release factor 1 of Neisseria meningitidis serogroup C (strain 053442).